Reading from the N-terminus, the 150-residue chain is uncharacterized protein (150 aa).

This is an uncharacterized protein from Rickettsia prowazekii (strain Madrid E).